Reading from the N-terminus, the 61-residue chain is Metallothionein-2 (61 aa).

Met1 carries the N-acetylmethionine modification. The beta stretch occupies residues Met1 to Cys29. Residues Cys5, Cys7, Cys13, Cys15, Cys19, Cys21, Cys24, Cys26, Cys29, Cys33, Cys34, Cys36, Cys37, Cys41, Cys44, Cys48, Cys50, and Cys57 each coordinate a divalent metal cation. Residues Lys30–Ala61 are alpha. Phosphoserine is present on Ser58. A divalent metal cation-binding residues include Cys59 and Cys60.

Belongs to the metallothionein superfamily. Type 1 family. As to quaternary structure, interacts with EOLA1.

Its function is as follows. Metallothioneins have a high content of cysteine residues that bind various heavy metals; these proteins are transcriptionally regulated by both heavy metals and glucocorticoids. This is Metallothionein-2 from Homo sapiens (Human).